The following is an 84-amino-acid chain: Defensin-like protein 199 (84 aa).

Positions 1–24 are cleaved as a signal peptide; the sequence is MAITMRTLVAFVFTIFFIISFVHS. 4 cysteine pairs are disulfide-bonded: Cys40–Cys80, Cys47–Cys72, Cys56–Cys78, and Cys60–Cys79.

Belongs to the DEFL family.

It is found in the secreted. This Arabidopsis thaliana (Mouse-ear cress) protein is Defensin-like protein 199.